Consider the following 171-residue polypeptide: ATP synthase subunit b (171 aa).

Residues 2-22 (FLVKMVLGFLIFLSPLCATGL) traverse the membrane as a helical segment.

This sequence belongs to the ATPase B chain family. In terms of assembly, F-type ATPases have 2 components, F(1) - the catalytic core - and F(0) - the membrane proton channel. F(1) has five subunits: alpha(3), beta(3), gamma(1), delta(1), epsilon(1). F(0) has three main subunits: a(1), b(2) and c(10-14). The alpha and beta chains form an alternating ring which encloses part of the gamma chain. F(1) is attached to F(0) by a central stalk formed by the gamma and epsilon chains, while a peripheral stalk is formed by the delta and b chains.

It localises to the cell inner membrane. In terms of biological role, f(1)F(0) ATP synthase produces ATP from ADP in the presence of a proton or sodium gradient. F-type ATPases consist of two structural domains, F(1) containing the extramembraneous catalytic core and F(0) containing the membrane proton channel, linked together by a central stalk and a peripheral stalk. During catalysis, ATP synthesis in the catalytic domain of F(1) is coupled via a rotary mechanism of the central stalk subunits to proton translocation. Functionally, component of the F(0) channel, it forms part of the peripheral stalk, linking F(1) to F(0). This chain is ATP synthase subunit b, found in Helicobacter pylori (strain Shi470).